A 152-amino-acid polypeptide reads, in one-letter code: Superoxide dismutase [Cu-Zn] 2 (152 aa).

Cu cation is bound by residues His-45, His-47, and His-62. The cysteines at positions 56 and 145 are disulfide-linked. 4 residues coordinate Zn(2+): His-62, His-70, His-79, and Asp-82. His-119 serves as a coordination point for Cu cation.

It belongs to the Cu-Zn superoxide dismutase family. Homodimer. Requires Cu cation as cofactor. Zn(2+) serves as cofactor.

It localises to the cytoplasm. The enzyme catalyses 2 superoxide + 2 H(+) = H2O2 + O2. In terms of biological role, destroys radicals which are normally produced within the cells and which are toxic to biological systems. In Solanum lycopersicum (Tomato), this protein is Superoxide dismutase [Cu-Zn] 2 (SODCC.5).